The primary structure comprises 131 residues: D-ribose pyranase (131 aa).

His-20 (proton donor) is an active-site residue. Substrate-binding positions include Asp-28, His-98, and 120-122 (FSN).

The protein belongs to the RbsD / FucU family. RbsD subfamily. Homodecamer.

It localises to the cytoplasm. It carries out the reaction beta-D-ribopyranose = beta-D-ribofuranose. It functions in the pathway carbohydrate metabolism; D-ribose degradation; D-ribose 5-phosphate from beta-D-ribopyranose: step 1/2. Functionally, catalyzes the interconversion of beta-pyran and beta-furan forms of D-ribose. This Lactobacillus acidophilus (strain ATCC 700396 / NCK56 / N2 / NCFM) protein is D-ribose pyranase.